A 320-amino-acid polypeptide reads, in one-letter code: Thioredoxin reductase (320 aa).

Threonine 36–glutamine 43 provides a ligand contact to FAD. Cysteine 136 and cysteine 139 are joined by a disulfide. Aspartate 287 to alanine 296 serves as a coordination point for FAD.

It belongs to the class-II pyridine nucleotide-disulfide oxidoreductase family. As to quaternary structure, homodimer. It depends on FAD as a cofactor.

It is found in the cytoplasm. The catalysed reaction is [thioredoxin]-dithiol + NADP(+) = [thioredoxin]-disulfide + NADPH + H(+). This Coxiella burnetii (strain RSA 493 / Nine Mile phase I) protein is Thioredoxin reductase (trxB).